The primary structure comprises 138 residues: Small ribosomal subunit protein uS11 (138 aa).

Low complexity predominate over residues 1–12 (MAQAKKGGTAAK). 2 disordered regions span residues 1-32 (MAQA…AAHI) and 119-138 (ISDV…RRRV). Residues 13 to 22 (KGQKTRRREK) are compositionally biased toward basic residues.

The protein belongs to the universal ribosomal protein uS11 family. As to quaternary structure, part of the 30S ribosomal subunit. Interacts with proteins S7 and S18. Binds to IF-3.

In terms of biological role, located on the platform of the 30S subunit, it bridges several disparate RNA helices of the 16S rRNA. Forms part of the Shine-Dalgarno cleft in the 70S ribosome. This chain is Small ribosomal subunit protein uS11, found in Mycolicibacterium smegmatis (strain ATCC 700084 / mc(2)155) (Mycobacterium smegmatis).